A 270-amino-acid chain; its full sequence is MELGKQRPVVYVVSDSVGETAELVVKAAASQFSGAGIEVRRIPYVEDKETVDEVIQLAKQADAIIAFTLVVPGIRTYLLEKATEAKVETVDIIGPMLEKISSLTKEEPRYEPGIVYRLDEDYFRKVEAIEFAVKYDDGRDPRGIVRADLVLIGVSRTSKTPLSQYLAHKRLKVANVPLVPEVEPPEELFKLSPKKVIGLKISPEQLNGIRAERLKTLGLKSQANYANIDRIKEELAYAEGIMKRIGCPVIDVSNKAVEETANLISSMFQK.

Position 153–160 (153–160 (GVSRTSKT)) interacts with ADP.

It belongs to the pyruvate, phosphate/water dikinase regulatory protein family. PDRP subfamily.

The catalysed reaction is N(tele)-phospho-L-histidyl/L-threonyl-[pyruvate, phosphate dikinase] + ADP = N(tele)-phospho-L-histidyl/O-phospho-L-threonyl-[pyruvate, phosphate dikinase] + AMP + H(+). The enzyme catalyses N(tele)-phospho-L-histidyl/O-phospho-L-threonyl-[pyruvate, phosphate dikinase] + phosphate + H(+) = N(tele)-phospho-L-histidyl/L-threonyl-[pyruvate, phosphate dikinase] + diphosphate. In terms of biological role, bifunctional serine/threonine kinase and phosphorylase involved in the regulation of the pyruvate, phosphate dikinase (PPDK) by catalyzing its phosphorylation/dephosphorylation. This is Putative pyruvate, phosphate dikinase regulatory protein from Halalkalibacterium halodurans (strain ATCC BAA-125 / DSM 18197 / FERM 7344 / JCM 9153 / C-125) (Bacillus halodurans).